We begin with the raw amino-acid sequence, 230 residues long: MKLIWLGHGGFRLETGETTLLIDPWLTGNPMLEDSQHDAATQGATHILLTHAHFDHVADVLELAKHLSVPIVGQYDLMGYWGETEGVQTVGFNKGGTVTVGDTRVSMVPASHSNTFSTRDGLRTAGSEVGYMIRAEGKTLYVSGDTDIMADMDWMGDYYKPEIGILSAGGHFTMDMKAAAYAAQRYFAFKTVIPCHYRTFPLLEQSAQDLIDGLPGVNVIEPQIMKDIEL.

Belongs to the UPF0173 family.

This Ruegeria sp. (strain TM1040) (Silicibacter sp.) protein is UPF0173 metal-dependent hydrolase TM1040_1920.